An 891-amino-acid polypeptide reads, in one-letter code: DNA mismatch repair protein MutS (891 aa).

Residue G632–S639 participates in ATP binding.

This sequence belongs to the DNA mismatch repair MutS family.

Its function is as follows. This protein is involved in the repair of mismatches in DNA. It is possible that it carries out the mismatch recognition step. This protein has a weak ATPase activity. The chain is DNA mismatch repair protein MutS from Rhodopirellula baltica (strain DSM 10527 / NCIMB 13988 / SH1).